A 196-amino-acid chain; its full sequence is RNA-free ribonuclease P (196 aa).

This sequence belongs to the HARP family.

It carries out the reaction Endonucleolytic cleavage of RNA, removing 5'-extranucleotides from tRNA precursor.. In terms of biological role, RNA-free RNase P that catalyzes the removal of the 5'-leader sequence from pre-tRNA to produce the mature 5'-terminus. This Thermodesulfovibrio yellowstonii (strain ATCC 51303 / DSM 11347 / YP87) protein is RNA-free ribonuclease P.